Consider the following 280-residue polypeptide: Glycoprotein G (280 aa).

The first 24 residues, 1–24 (MGHSGENVLCVALLAIYLAAGGAA), serve as a signal peptide directing secretion. Residues Asn85 and Asn111 are each glycosylated (N-linked (GlcNAc...) asparagine; by host). The segment at 191-218 (ESSEERVVATDSDSGSCEDDEKEEKSDC) is disordered.

This sequence belongs to the alphaherpesvirinae glycoprotein G family.

This chain is Glycoprotein G (gG), found in Psittacid herpesvirus 1 (isolate Amazon parrot/-/97-0001/1997) (PsHV-1).